The sequence spans 482 residues: tRNA sulfurtransferase (482 aa).

Positions 61-165 constitute a THUMP domain; that stretch reads LAIRDALTRI…DDRLLLIKGR (105 aa). Residues 183-184, K265, G287, and Q296 each bind ATP; that span reads LI. A disulfide bridge connects residues C344 and C456. One can recognise a Rhodanese domain in the interval 404–482; that stretch reads FGPNDVILDI…GFNNVKVYRP (79 aa). The active-site Cysteine persulfide intermediate is the C456.

Belongs to the ThiI family.

Its subcellular location is the cytoplasm. It carries out the reaction [ThiI sulfur-carrier protein]-S-sulfanyl-L-cysteine + a uridine in tRNA + 2 reduced [2Fe-2S]-[ferredoxin] + ATP + H(+) = [ThiI sulfur-carrier protein]-L-cysteine + a 4-thiouridine in tRNA + 2 oxidized [2Fe-2S]-[ferredoxin] + AMP + diphosphate. It catalyses the reaction [ThiS sulfur-carrier protein]-C-terminal Gly-Gly-AMP + S-sulfanyl-L-cysteinyl-[cysteine desulfurase] + AH2 = [ThiS sulfur-carrier protein]-C-terminal-Gly-aminoethanethioate + L-cysteinyl-[cysteine desulfurase] + A + AMP + 2 H(+). It functions in the pathway cofactor biosynthesis; thiamine diphosphate biosynthesis. Functionally, catalyzes the ATP-dependent transfer of a sulfur to tRNA to produce 4-thiouridine in position 8 of tRNAs, which functions as a near-UV photosensor. Also catalyzes the transfer of sulfur to the sulfur carrier protein ThiS, forming ThiS-thiocarboxylate. This is a step in the synthesis of thiazole, in the thiamine biosynthesis pathway. The sulfur is donated as persulfide by IscS. The protein is tRNA sulfurtransferase of Escherichia coli O139:H28 (strain E24377A / ETEC).